The primary structure comprises 127 residues: Large ribosomal subunit protein bL12 (127 aa).

It belongs to the bacterial ribosomal protein bL12 family. In terms of assembly, homodimer. Part of the ribosomal stalk of the 50S ribosomal subunit. Forms a multimeric L10(L12)X complex, where L10 forms an elongated spine to which 2 to 4 L12 dimers bind in a sequential fashion. Binds GTP-bound translation factors.

Functionally, forms part of the ribosomal stalk which helps the ribosome interact with GTP-bound translation factors. Is thus essential for accurate translation. The polypeptide is Large ribosomal subunit protein bL12 (Rhizobium etli (strain ATCC 51251 / DSM 11541 / JCM 21823 / NBRC 15573 / CFN 42)).